A 234-amino-acid polypeptide reads, in one-letter code: Large ribosomal subunit protein uL1 (234 aa).

This sequence belongs to the universal ribosomal protein uL1 family. In terms of assembly, part of the 50S ribosomal subunit.

Binds directly to 23S rRNA. The L1 stalk is quite mobile in the ribosome, and is involved in E site tRNA release. Its function is as follows. Protein L1 is also a translational repressor protein, it controls the translation of the L11 operon by binding to its mRNA. The polypeptide is Large ribosomal subunit protein uL1 (Aliivibrio fischeri (strain MJ11) (Vibrio fischeri)).